The chain runs to 483 residues: Cysteine--tRNA ligase (483 aa).

Position 29 (Cys29) interacts with Zn(2+). Residues Pro31–His41 carry the 'HIGH' region motif. 3 residues coordinate Zn(2+): Cys221, His246, and Glu250. The 'KMSKS' region signature appears at Lys278–Ser282. An ATP-binding site is contributed by Lys281.

It belongs to the class-I aminoacyl-tRNA synthetase family. As to quaternary structure, monomer. Zn(2+) is required as a cofactor.

The protein resides in the cytoplasm. The enzyme catalyses tRNA(Cys) + L-cysteine + ATP = L-cysteinyl-tRNA(Cys) + AMP + diphosphate. The chain is Cysteine--tRNA ligase from Chlorobium luteolum (strain DSM 273 / BCRC 81028 / 2530) (Pelodictyon luteolum).